A 553-amino-acid polypeptide reads, in one-letter code: Ergothioneine transport permease/ergothioneine binding protein EgtU (553 aa).

In terms of domain architecture, ABC transmembrane type-1 spans 57–236 (LAQHFIIVAL…LFSVLADKFV (180 aa)). A run of 6 helical transmembrane segments spans residues 61-81 (FIIV…IGVF), 98-118 (FLYT…IGVG), 122-142 (ALLV…YNAL), 182-202 (IAVV…AGGL), 219-239 (VAGS…VSVF), and 261-281 (VYTN…WLIP). Topologically, residues 282–553 (RNAIEEKPLV…AKDFLERLGL (272 aa)) are periplasmic. Residues 288–549 (KPLVVATKPS…PKIVAKDFLE (262 aa)) form an ergothioneine binding domain region.

The protein in the N-terminal section; belongs to the binding-protein-dependent transport system permease family. It in the C-terminal section; belongs to the OsmX family. As to quaternary structure, the complex is composed of two ATP-binding proteins (EgtV) and two transmembrane proteins (EgtU).

The protein resides in the cell inner membrane. Part of the ABC transporter complex EgtUV involved in the uptake of ergothioneine (EGT), a natural low-molecular weight (LMW) thiol antioxidant which protects H.pylori against bleach stress. Responsible for the translocation of the substrate across the membrane. Also contains a C-terminal periplasmic solute-binding domain (SBD) which binds to ergothioneine with low-micromolar affinity. Cannot bind the structurally similar compounds glycine betaine, choline, proline, carnitine or histidine. This chain is Ergothioneine transport permease/ergothioneine binding protein EgtU, found in Helicobacter pylori (strain G27).